Reading from the N-terminus, the 410-residue chain is 26S proteasome non-ATPase regulatory subunit 6 (410 aa).

In terms of domain architecture, PCI spans 207-382 (DFAGAADLFL…GVIEVNHRDS (176 aa)).

Belongs to the proteasome subunit S10 family. In terms of tissue distribution, expressed in multiple tissues including the intestine, pharynx and hypodermis.

Acts as a regulatory subunit of the 26S proteasome which is involved in the ATP-dependent degradation of ubiquitinated proteins. The chain is 26S proteasome non-ATPase regulatory subunit 6 (rpn-7) from Caenorhabditis elegans.